We begin with the raw amino-acid sequence, 237 residues long: MFLTRTEYDRGVNTFSPEGRLFQVEYAIEAIKLGSTAIGLKTKDGVVLAVEKRVTSPLLEPSSVEKIMEIDEHIGCAMSGLIADARTLVEHARVETQNHRFSYGEPMTVESTTQAICDLALRFGEGDEESMSRPFGVSLLIAGHDENGPSLYYTDPSGTFWQCNAKAIGSGSEGADSSLQEQYNKELTLQEAETIALSILKQVMEEKVTPNNVDIAKVSPNYHLYTPAEVEAVIARL.

Belongs to the peptidase T1A family. The 26S proteasome consists of a 20S proteasome core and two 19S regulatory subunits. The 20S proteasome core is composed of 28 subunits that are arranged in four stacked rings, resulting in a barrel-shaped structure. The two end rings are each formed by seven alpha subunits, and the two central rings are each formed by seven beta subunits. The catalytic chamber with the active sites is on the inside of the barrel.

It localises to the cytoplasm. It is found in the nucleus. Functionally, the proteasome is a multicatalytic proteinase complex which is characterized by its ability to cleave peptides with Arg, Phe, Tyr, Leu, and Glu adjacent to the leaving group at neutral or slightly basic pH. The proteasome has an ATP-dependent proteolytic activity. The chain is Proteasome subunit alpha type-5 (PAE1) from Oryza sativa subsp. japonica (Rice).